The chain runs to 512 residues: Sucrose transport protein SUC2 (512 aa).

The Cytoplasmic segment spans residues methionine 1–lysine 31. A helical transmembrane segment spans residues isoleucine 32–leucine 52. Residues leucine 53–lysine 65 lie on the Extracellular side of the membrane. The chain crosses the membrane as a helical span at residues tryptophan 66–glycine 86. Over tyrosine 87–arginine 100 the chain is Cytoplasmic. Residues proline 101–alanine 121 traverse the membrane as a helical segment. The Extracellular segment spans residues aspartate 122–arginine 138. The chain crosses the membrane as a helical span at residues alanine 139–glycine 159. Residues proline 160 to arginine 177 are Cytoplasmic-facing. The chain crosses the membrane as a helical span at residues threonine 178 to glycine 198. The Extracellular portion of the chain corresponds to serine 199–lysine 223. A helical transmembrane segment spans residues threonine 224–valine 244. The Cytoplasmic segment spans residues lysine 245–proline 278. A helical transmembrane segment spans residues methionine 279–phenylalanine 299. At aspartate 300–glycine 332 the chain is on the extracellular side. A helical membrane pass occupies residues alanine 333–isoleucine 353. Topologically, residues glycine 354–arginine 362 are cytoplasmic. A helical transmembrane segment spans residues leucine 363 to lysine 383. Over glutamine 384–alanine 407 the chain is Extracellular. Residue asparagine 402 is glycosylated (N-linked (GlcNAc...) asparagine). Residues leucine 408–leucine 428 form a helical membrane-spanning segment. Residues alanine 429–glutamine 440 lie on the Cytoplasmic side of the membrane. Residues glycine 441–glycine 461 traverse the membrane as a helical segment. Residues glycine 462–asparagine 473 are Extracellular-facing. A helical transmembrane segment spans residues isoleucine 474–valine 494. Over leucine 495–histidine 512 the chain is Cytoplasmic.

The protein belongs to the glycoside-pentoside-hexuronide (GPH) cation symporter transporter (TC 2.A.2.4) family. As to quaternary structure, homodimer. Interacts with SUC3 and SUC4. In terms of tissue distribution, expressed in leaves and, to a lower extent, in roots, flowers and stems. Highly specific to the phloem, exclusively localized in companion cells (at protein level).

Its subcellular location is the cell membrane. It carries out the reaction sucrose(out) + H(+)(out) = sucrose(in) + H(+)(in). It functions in the pathway glycan biosynthesis; sucrose metabolism. With respect to regulation, inhibited by protonophores (e.g. dinitrophenol and carbonyl cyanide m-chlorophenyl-hydrazone (CCCP)) and SH group inhibitors (e.g. N-ethylmaleimide (NEM) and p-chloromercuriphenyl sulphonic acid (PCMPS)). Responsible for the transport of sucrose into the cell, with the concomitant uptake of protons (symport system). Can also transport other glucosides such as maltose, arbutin (hydroquinone-beta-D-glucoside), salicin (2-(hydroxymethyl)phenyl-beta-D-glucoside), alpha-phenylglucoside, beta-phenylglucoside, alpha-paranitrophenylglucoside, beta-paranitrophenylglucoside, and paranitrophenyl-beta-thioglucoside. May also transport biotin. Required for apoplastic phloem sucrose loading in source tissues (e.g. leaves) in order to transport it to sink tissues (e.g. roots, flowers). This is Sucrose transport protein SUC2 from Arabidopsis thaliana (Mouse-ear cress).